The sequence spans 251 residues: Ubiquinone/menaquinone biosynthesis C-methyltransferase UbiE (251 aa).

Residues threonine 74, aspartate 95, asparagine 123–alanine 124, and serine 140 each bind S-adenosyl-L-methionine.

It belongs to the class I-like SAM-binding methyltransferase superfamily. MenG/UbiE family.

The enzyme catalyses a 2-demethylmenaquinol + S-adenosyl-L-methionine = a menaquinol + S-adenosyl-L-homocysteine + H(+). It catalyses the reaction a 2-methoxy-6-(all-trans-polyprenyl)benzene-1,4-diol + S-adenosyl-L-methionine = a 5-methoxy-2-methyl-3-(all-trans-polyprenyl)benzene-1,4-diol + S-adenosyl-L-homocysteine + H(+). It functions in the pathway quinol/quinone metabolism; menaquinone biosynthesis; menaquinol from 1,4-dihydroxy-2-naphthoate: step 2/2. It participates in cofactor biosynthesis; ubiquinone biosynthesis. In terms of biological role, methyltransferase required for the conversion of demethylmenaquinol (DMKH2) to menaquinol (MKH2) and the conversion of 2-polyprenyl-6-methoxy-1,4-benzoquinol (DDMQH2) to 2-polyprenyl-3-methyl-6-methoxy-1,4-benzoquinol (DMQH2). The sequence is that of Ubiquinone/menaquinone biosynthesis C-methyltransferase UbiE from Yersinia pestis bv. Antiqua (strain Angola).